A 475-amino-acid chain; its full sequence is Ankyrin repeat, SAM and basic leucine zipper domain-containing protein 1 (475 aa).

Over residues 1 to 10 (MAAGRLRGLA) the composition is skewed to low complexity. The tract at residues 1-24 (MAAGRLRGLAVAGGGESSESDDDG) is disordered. 3 positions are modified to phosphoserine: Ser17, Ser18, and Ser20. ANK repeat units follow at residues 45-74 (EKNE…SVDS), 78-107 (YGWT…NANF), 110-144 (DKQT…DPNV), 148-177 (RLMT…EVNT), 181-210 (SGYT…DKML), and 214-243 (DGNI…PLKG). An SAM domain is found at 272–334 (SYTAFGDLEV…KILAALKELD (63 aa)).

In terms of assembly, interacts with DDX4, PIWIL1, RANBP9 and TDRD1.

Its subcellular location is the cytoplasm. Functionally, plays a central role during spermatogenesis by repressing transposable elements and preventing their mobilization, which is essential for the germline integrity. Acts via the piRNA metabolic process, which mediates the repression of transposable elements during meiosis by forming complexes composed of piRNAs and Piwi proteins and governs the methylation and subsequent repression of transposons. Its association with pi-bodies suggests a participation in the primary piRNAs metabolic process. Required prior to the pachytene stage to facilitate the production of multiple types of piRNAs, including those associated with repeats involved in the regulation of retrotransposons. May act by mediating protein-protein interactions during germ cell maturation. This Carollia perspicillata (Seba's short-tailed bat) protein is Ankyrin repeat, SAM and basic leucine zipper domain-containing protein 1 (ASZ1).